The chain runs to 410 residues: Dihydrolipoyllysine-residue acetyltransferase component of pyruvate dehydrogenase complex (410 aa).

Positions 1 to 69 constitute a Lipoyl-binding domain; it reads MPDIGTDLVE…TTGSLIAILN (69 aa). At Lys-35 the chain carries N6-lipoyllysine. A disordered region spans residues 81 to 100; sequence SSSYSFKNSKNTSTNSNLGN. Residues 113-150 form the Peripheral subunit-binding (PSBD) domain; that stretch reads HATPTVRRLARKFDIKLENITGTGRKGRILKEDVISYK. His-383 is a catalytic residue.

This sequence belongs to the 2-oxoacid dehydrogenase family. In terms of assembly, forms a 24-polypeptide structural core with octahedral symmetry. It depends on (R)-lipoate as a cofactor.

The catalysed reaction is N(6)-[(R)-dihydrolipoyl]-L-lysyl-[protein] + acetyl-CoA = N(6)-[(R)-S(8)-acetyldihydrolipoyl]-L-lysyl-[protein] + CoA. Its function is as follows. The pyruvate dehydrogenase complex catalyzes the overall conversion of pyruvate to acetyl-CoA and CO(2). It contains multiple copies of three enzymatic components: pyruvate dehydrogenase (E1), dihydrolipoamide acetyltransferase (E2) and lipoamide dehydrogenase (E3). The protein is Dihydrolipoyllysine-residue acetyltransferase component of pyruvate dehydrogenase complex (aceF) of Buchnera aphidicola subsp. Baizongia pistaciae (strain Bp).